A 596-amino-acid polypeptide reads, in one-letter code: Succinate dehydrogenase flavoprotein subunit (596 aa).

FAD contacts are provided by residues Gly18 to Gly23, Ser41 to Gly56, and Asp225. Residue His49 is modified to Tele-8alpha-FAD histidine. Substrate-binding residues include His246 and Thr258. Arg290 (proton acceptor) is an active-site residue. His357 is a substrate binding site. Glu391 is a binding site for FAD. Position 402 (Arg402) interacts with substrate. Residue Ser407–Leu408 participates in FAD binding.

It belongs to the FAD-dependent oxidoreductase 2 family. FRD/SDH subfamily. In terms of assembly, part of an enzyme complex containing four subunits: a flavoprotein, an iron-sulfur, cytochrome b-556, and a hydrophobic anchor protein. FAD serves as cofactor.

It is found in the cell inner membrane. It carries out the reaction a quinone + succinate = fumarate + a quinol. Its pathway is carbohydrate metabolism; tricarboxylic acid cycle; fumarate from succinate (bacterial route): step 1/1. The polypeptide is Succinate dehydrogenase flavoprotein subunit (sdhA) (Rickettsia bellii (strain RML369-C)).